A 506-amino-acid polypeptide reads, in one-letter code: Histidine ammonia-lyase (506 aa).

Residues 142-144 constitute a cross-link (5-imidazolinone (Ala-Gly)); it reads ASG. Serine 143 carries the post-translational modification 2,3-didehydroalanine (Ser).

It belongs to the PAL/histidase family. In terms of processing, contains an active site 4-methylidene-imidazol-5-one (MIO), which is formed autocatalytically by cyclization and dehydration of residues Ala-Ser-Gly.

The protein resides in the cytoplasm. It carries out the reaction L-histidine = trans-urocanate + NH4(+). It participates in amino-acid degradation; L-histidine degradation into L-glutamate; N-formimidoyl-L-glutamate from L-histidine: step 1/3. This Bacillus cereus (strain ATCC 14579 / DSM 31 / CCUG 7414 / JCM 2152 / NBRC 15305 / NCIMB 9373 / NCTC 2599 / NRRL B-3711) protein is Histidine ammonia-lyase.